Here is a 336-residue protein sequence, read N- to C-terminus: Flap endonuclease 1 (336 aa).

The segment at 1-98 (MGADIGDLFE…AEIEERKKRR (98 aa)) is N-domain. Residues D27, D80, E151, E153, D172, D174, and D235 each coordinate Mg(2+). The segment at 115–256 (DAKKYAQAAG…KALNYIKTYG (142 aa)) is I-domain. Residues 328–336 (TQATLERWF) are interaction with PCNA.

Belongs to the XPG/RAD2 endonuclease family. FEN1 subfamily. In terms of assembly, interacts with PCNA. PCNA stimulates the nuclease activity without altering cleavage specificity. The cofactor is Mg(2+).

Functionally, structure-specific nuclease with 5'-flap endonuclease and 5'-3' exonuclease activities involved in DNA replication and repair. During DNA replication, cleaves the 5'-overhanging flap structure that is generated by displacement synthesis when DNA polymerase encounters the 5'-end of a downstream Okazaki fragment. Binds the unpaired 3'-DNA end and kinks the DNA to facilitate 5' cleavage specificity. Cleaves one nucleotide into the double-stranded DNA from the junction in flap DNA, leaving a nick for ligation. Also involved in the base excision repair (BER) pathway. Acts as a genome stabilization factor that prevents flaps from equilibrating into structures that lead to duplications and deletions. Also possesses 5'-3' exonuclease activity on nicked or gapped double-stranded DNA. This Archaeoglobus fulgidus (strain ATCC 49558 / DSM 4304 / JCM 9628 / NBRC 100126 / VC-16) protein is Flap endonuclease 1.